A 383-amino-acid polypeptide reads, in one-letter code: Geranylgeranyl pyrophosphate synthase esdpD (383 aa).

The isopentenyl diphosphate site is built by K88, R91, and H120. 2 residues coordinate Mg(2+): D150 and D154. A dimethylallyl diphosphate-binding site is contributed by R159. Position 160 (R160) interacts with isopentenyl diphosphate. Dimethylallyl diphosphate is bound by residues K237, T238, and Q271. Mg(2+) is bound at residue D274. Positions 278, 288, and 298 each coordinate dimethylallyl diphosphate.

The protein belongs to the FPP/GGPP synthase family. Mg(2+) serves as cofactor.

It catalyses the reaction isopentenyl diphosphate + dimethylallyl diphosphate = (2E)-geranyl diphosphate + diphosphate. It carries out the reaction isopentenyl diphosphate + (2E)-geranyl diphosphate = (2E,6E)-farnesyl diphosphate + diphosphate. The catalysed reaction is isopentenyl diphosphate + (2E,6E)-farnesyl diphosphate = (2E,6E,10E)-geranylgeranyl diphosphate + diphosphate. It functions in the pathway secondary metabolite biosynthesis; terpenoid biosynthesis. Functionally, geranylgeranyl pyrophosphate synthase; part of the cluster that mediates the biosynthesis of shearones, diterpenoid pyrones (DPs) which are structurally diverse meroterpenoids consisting of a diterpene linked by a pyrone, and which may exhibit a range of bioactivities. Within the pathway, esdpD takes part to the biosynthesis of the molecular scaffold by providing geranylgeranyl pyrophosphate (GGPP) to the prenyltransferase esdpC for C-3 geranylgeranylation of the alpha-pyrone. The molecular scaffold is commonly biosynthesized by a series of enzymes including the non-reducing polyketide synthase (NR-PKS) esdpA that generates an alpha-pyrone; the prenyltransferase esdpC that attaches a geranylgeranyl pyrophosphate (GGPP) produced by the GGPP synthase (GGPPS) esdpD onto the pyrone unit; the FAD-dependent monooxygenase esdpE that converts an olefin on the diterpene unit into an epoxide; and the terpene cyclase esdpB that catalyzes the cyclization reactions to give the molecular backbone shearone A. In the modification steps, esdpF oxidizes the hydroxy group to a ketone at C-3 and esdpG then attaches hydroxy groups at both C-11 and C-12. After that, esdpI hydroxylates at C-20 and esdpH hydroxylates at C-6'. The ether bridge is generated by nucleophilic attack of the hydroxy group at C-20 to the carbonyl carbon at C-3. EsdpH can also functions prior to esdpI. The different combinations of these modification enzymes lead to the production of diverse shearone derivatives, shearone I being the end product of the pathway. The alpha-ketoglutarate-dependent dioxygenase esdpJ seems not to be involved in this pathway. This chain is Geranylgeranyl pyrophosphate synthase esdpD, found in Penicillium shearii (Eupenicillium shearii).